The following is a 425-amino-acid chain: tRNA(Ile)-lysidine synthase (425 aa).

Residue 27–32 participates in ATP binding; it reads SGGLDS.

The protein belongs to the tRNA(Ile)-lysidine synthase family.

The protein resides in the cytoplasm. It catalyses the reaction cytidine(34) in tRNA(Ile2) + L-lysine + ATP = lysidine(34) in tRNA(Ile2) + AMP + diphosphate + H(+). In terms of biological role, ligates lysine onto the cytidine present at position 34 of the AUA codon-specific tRNA(Ile) that contains the anticodon CAU, in an ATP-dependent manner. Cytidine is converted to lysidine, thus changing the amino acid specificity of the tRNA from methionine to isoleucine. This chain is tRNA(Ile)-lysidine synthase, found in Streptococcus pneumoniae (strain 70585).